A 152-amino-acid chain; its full sequence is Succinate dehydrogenase [ubiquinone] cytochrome b small subunit A, mitochondrial (152 aa).

The transit peptide at 1 to 21 (MVTVLRLSSLCRANRASAFKS) directs the protein to the mitochondrion. The Mitochondrial matrix portion of the chain corresponds to 22–56 (LLIRPVPCLSQDLHTVQTSQIHTSQNHHAASKAAS). The chain crosses the membrane as a helical span at residues 57-78 (LHWTSERALSVALLGLLPAAYL). Residues 79-83 (YPGAA) lie on the Mitochondrial intermembrane side of the membrane. A helical membrane pass occupies residues 84–104 (VDYSLAAALTLHGHWGLGQVV). Residue H95 participates in heme b binding. Residues 105 to 113 (TDYVHGDAK) lie on the Mitochondrial matrix side of the membrane. Residue Y107 coordinates a ubiquinone. The helical transmembrane segment at 114-135 (IKLANTSLFALSALTFAGLCYF) threads the bilayer. Residues 136–152 (NYHDVGICKAVAMLWSL) lie on the Mitochondrial intermembrane side of the membrane.

It belongs to the CybS family. In terms of assembly, component of complex II composed of four subunits: the flavoprotein (FP) SDHA, iron-sulfur protein (IP) SDHB, and a cytochrome b560 composed of SDHC and SDHD.

It is found in the mitochondrion inner membrane. It functions in the pathway carbohydrate metabolism; tricarboxylic acid cycle. Functionally, membrane-anchoring subunit of succinate dehydrogenase (SDH) that is involved in complex II of the mitochondrial electron transport chain and is responsible for transferring electrons from succinate to ubiquinone (coenzyme Q). SDH also oxidizes malate to the non-canonical enol form of oxaloacetate, enol-oxaloacetate. Enol-oxaloacetate, which is a potent inhibitor of the succinate dehydrogenase activity, is further isomerized into keto-oxaloacetate. This is Succinate dehydrogenase [ubiquinone] cytochrome b small subunit A, mitochondrial (sdhd-a) from Xenopus laevis (African clawed frog).